The primary structure comprises 427 residues: MSNNQILFERAQKTIPGGVNSPVRAFRSVGGTPRFVARAQGPYFWDADGKQYIDYIGSWGPMIVGHVHPEVLSAVQNVLADGFSFGAPTEAEIEIAEEICKLVPSIEQVRMVSSGTEATMSALRLARGFTGRSRIVKFEGCYHGHADSLLVKAGSGLLTFGNPTSAGVPADIAKHTTVLEYNNVAALEEAFGAFGDEIAAVIVEPVAGNMNLVRGTPEFLNALRALCMKHGAVLIFDEVMCGFRVALGGAQAYYGIAADLTCLGKVIGGGMPAAAFGGRRDIMAHLAPLGGVYQAGTLSGNPIAVAAGLKTLQLIQAPGFYDALTAQTKRLADGLAAEARAAGVPFAADSIGAMFGLYFAERVPGSFAEVTKSDVERFNRFFHLMLDEGVYFAPSAYEAGFVSSTHDDAVIDATLAAARRAFAALAA.

K265 carries the post-translational modification N6-(pyridoxal phosphate)lysine.

Belongs to the class-III pyridoxal-phosphate-dependent aminotransferase family. HemL subfamily. As to quaternary structure, homodimer. Pyridoxal 5'-phosphate serves as cofactor.

The protein resides in the cytoplasm. It catalyses the reaction (S)-4-amino-5-oxopentanoate = 5-aminolevulinate. It functions in the pathway porphyrin-containing compound metabolism; protoporphyrin-IX biosynthesis; 5-aminolevulinate from L-glutamyl-tRNA(Glu): step 2/2. The polypeptide is Glutamate-1-semialdehyde 2,1-aminomutase (Burkholderia orbicola (strain MC0-3)).